The chain runs to 80 residues: Large ribosomal subunit protein bL31B (80 aa).

It belongs to the bacterial ribosomal protein bL31 family. Type B subfamily. As to quaternary structure, part of the 50S ribosomal subunit.

The chain is Large ribosomal subunit protein bL31B from Xylella fastidiosa (strain M23).